Here is a 435-residue protein sequence, read N- to C-terminus: MKKVHFIGIGGIGISAIARFLFEKGHKISGSDIKESKTTQELKEQGMDVITPHCKEAIKDQDFVVYSAAIKDDNVELVEARKKGIKCFSRKEILPYVLEDKRVFAVAGAHGKSTTSAMLSSLIEGSVIIGAISKQFGSNMRYAQSDNVVFEADESDSSFLNSNPYLAVVTNAEPEHMEHYDYDLAKFYAAYKGFLERAKVRVINAEDEFLSTLKLDAIRLFPSSDITELAMVVRDYQPYTSFNLKNLGKFEVFGMGQHIAIDASLAILAALHETPLKDIRENLLNFKGIKKRFDILSADKNFILIDDYAHHPTEIRATLNSVFEYAKLLGVSNVTAIFQPHRYTRLSTNLEGFKECFKGVDELVILPVYAAGEKPIEVDMKGAFSEYSPIFTDKVERVGEAIEFTDEFGVKNRLSDGIVVGFGAGDISVQLRGGY.

An ATP-binding site is contributed by 108 to 114 (GAHGKST).

It belongs to the MurCDEF family.

It localises to the cytoplasm. It carries out the reaction UDP-N-acetyl-alpha-D-muramate + L-alanine + ATP = UDP-N-acetyl-alpha-D-muramoyl-L-alanine + ADP + phosphate + H(+). Its pathway is cell wall biogenesis; peptidoglycan biosynthesis. Cell wall formation. The protein is UDP-N-acetylmuramate--L-alanine ligase of Campylobacter curvus (strain 525.92).